A 50-amino-acid chain; its full sequence is U37-theraphotoxin-Cg1b (50 aa).

The first 19 residues, 1-19 (MRVLLIIAGLALLSVVCYT), serve as a signal peptide directing secretion.

This sequence belongs to the neurotoxin 10 (Hwtx-1) family. 67 (Jztx-67) subfamily. As to expression, expressed by the venom gland.

It localises to the secreted. This is U37-theraphotoxin-Cg1b from Chilobrachys guangxiensis (Chinese earth tiger tarantula).